The following is a 359-amino-acid chain: Holliday junction branch migration complex subunit RuvB (359 aa).

The segment at 1–187 is large ATPase domain (RuvB-L); the sequence is MSGLEHGDAS…FGFTAHLEFY (187 aa). Residues L26, R27, G68, K71, T72, T73, 134-136, R177, Y187, and R224 each bind ATP; that span reads EDY. T72 contacts Mg(2+). Residues 188-257 are small ATPAse domain (RuvB-S); that stretch reads ETHELEQVIE…SVRAALDLYD (70 aa). Positions 260–359 are head domain (RuvB-H); sequence PLGLDRLDRA…VAGALFGDEL (100 aa). 2 residues coordinate DNA: R315 and R320.

Belongs to the RuvB family. Homohexamer. Forms an RuvA(8)-RuvB(12)-Holliday junction (HJ) complex. HJ DNA is sandwiched between 2 RuvA tetramers; dsDNA enters through RuvA and exits via RuvB. An RuvB hexamer assembles on each DNA strand where it exits the tetramer. Each RuvB hexamer is contacted by two RuvA subunits (via domain III) on 2 adjacent RuvB subunits; this complex drives branch migration. In the full resolvosome a probable DNA-RuvA(4)-RuvB(12)-RuvC(2) complex forms which resolves the HJ.

It localises to the cytoplasm. It carries out the reaction ATP + H2O = ADP + phosphate + H(+). The RuvA-RuvB-RuvC complex processes Holliday junction (HJ) DNA during genetic recombination and DNA repair, while the RuvA-RuvB complex plays an important role in the rescue of blocked DNA replication forks via replication fork reversal (RFR). RuvA specifically binds to HJ cruciform DNA, conferring on it an open structure. The RuvB hexamer acts as an ATP-dependent pump, pulling dsDNA into and through the RuvAB complex. RuvB forms 2 homohexamers on either side of HJ DNA bound by 1 or 2 RuvA tetramers; 4 subunits per hexamer contact DNA at a time. Coordinated motions by a converter formed by DNA-disengaged RuvB subunits stimulates ATP hydrolysis and nucleotide exchange. Immobilization of the converter enables RuvB to convert the ATP-contained energy into a lever motion, pulling 2 nucleotides of DNA out of the RuvA tetramer per ATP hydrolyzed, thus driving DNA branch migration. The RuvB motors rotate together with the DNA substrate, which together with the progressing nucleotide cycle form the mechanistic basis for DNA recombination by continuous HJ branch migration. Branch migration allows RuvC to scan DNA until it finds its consensus sequence, where it cleaves and resolves cruciform DNA. The protein is Holliday junction branch migration complex subunit RuvB of Clavibacter michiganensis subsp. michiganensis (strain NCPPB 382).